A 35-amino-acid chain; its full sequence is Photosystem II reaction center protein T (35 aa).

Residues 3-23 (ALVYTFLLVSTLGILFFAIFF) form a helical membrane-spanning segment.

The protein belongs to the PsbT family. In terms of assembly, PSII is composed of 1 copy each of membrane proteins PsbA, PsbB, PsbC, PsbD, PsbE, PsbF, PsbH, PsbI, PsbJ, PsbK, PsbL, PsbM, PsbT, PsbY, PsbZ, Psb30/Ycf12, at least 3 peripheral proteins of the oxygen-evolving complex and a large number of cofactors. It forms dimeric complexes.

It is found in the plastid. The protein localises to the chloroplast thylakoid membrane. Found at the monomer-monomer interface of the photosystem II (PS II) dimer, plays a role in assembly and dimerization of PSII. PSII is a light-driven water plastoquinone oxidoreductase, using light energy to abstract electrons from H(2)O, generating a proton gradient subsequently used for ATP formation. The sequence is that of Photosystem II reaction center protein T from Gnetum gnemon (Spanish joint-fir).